A 112-amino-acid polypeptide reads, in one-letter code: Replication initiation control protein YabA (112 aa).

His-85, Cys-87, Cys-101, and Cys-104 together coordinate Zn(2+).

The protein belongs to the YabA family. Homotetramer. Interacts with both DnaA and DnaN, acting as a bridge between these two proteins. Zn(2+) serves as cofactor.

The protein resides in the cytoplasm. It is found in the nucleoid. Its function is as follows. Involved in control of chromosome replication initiation. Inhibits the cooperative binding of DnaA to the oriC region, thus negatively regulating initiation of chromosome replication. Inhibits the ability of DnaA-ATP to form a helix on DNA; does not disassemble preformed DnaA-DNA helices. Decreases the residence time of DnaA on the chromosome at its binding sites (oriC, replication forks and promoter-binding sites). Tethers DnaA to the replication machinery via the DNA polymerase beta sliding clamp subunit (dnaN). Associates with oriC and other DnaA targets on the chromosome in a DnaA-dependent manner. The chain is Replication initiation control protein YabA from Lacticaseibacillus casei (strain BL23) (Lactobacillus casei).